Here is a 1493-residue protein sequence, read N- to C-terminus: Pleckstrin homology domain-containing family H member 2 (1493 aa).

Residues 20–175 (LESQLMKFRV…LQEVQGKKSS (156 aa)) adopt a coiled-coil conformation. 4 disordered regions span residues 202 to 230 (SPPQ…DMEE), 245 to 335 (NNRG…SSSI), 363 to 439 (LNSP…LPPP), and 613 to 705 (SSSP…EPLE). Basic and acidic residues predominate over residues 208–230 (KSEEMSKISSKEPEFTEGKDMEE). Composition is skewed to polar residues over residues 245–260 (NNRG…CGSE) and 267–281 (TSFA…NSGA). Residues 374-388 (LSKKEQDSSSDELNK) show a composition bias toward basic and acidic residues. Polar residues-rich tracts occupy residues 389-409 (KFQS…TPSP), 421-432 (NSLSGKGTQLVP), and 676-698 (STDT…SSDN). PH domains lie at 703 to 797 (PLEK…NVLR) and 811 to 919 (KPTM…VAAG). The region spanning 955-1110 (HSKEGIISPL…PSRMEILSTL (156 aa)) is the MyTH4 domain. An FERM domain is found at 1121-1451 (FSIPVHFMNG…SYINNFHQQK (331 aa)). Residues 1474-1493 (MMGSQPLLSSSRPTKGPTLL) form a disordered region.

Self-associates. Interacts with TGFB1I1. As to expression, kidney. Reduced expression in patients with focal segmental glomerulosclerosis.

The protein resides in the cytoplasm. The protein localises to the cytoskeleton. It localises to the cell membrane. Its subcellular location is the cell projection. It is found in the lamellipodium. Its function is as follows. In the kidney glomerulus may play a role in linking podocyte foot processes to the glomerular basement membrane. May be involved in stabilization of F-actin by attenuating its depolymerization. Can recruit TGFB1I1 from focal adhesions to podocyte lamellipodia. The polypeptide is Pleckstrin homology domain-containing family H member 2 (PLEKHH2) (Homo sapiens (Human)).